The following is a 68-amino-acid chain: DNA gyrase inhibitor YacG (68 aa).

4 residues coordinate Zn(2+): Cys12, Cys15, Cys30, and Cys34. Residues 48–68 (KLKTQDAPTSGKGQHSDDYED) form a disordered region.

Belongs to the DNA gyrase inhibitor YacG family. Interacts with GyrB. Zn(2+) is required as a cofactor.

Functionally, inhibits all the catalytic activities of DNA gyrase by preventing its interaction with DNA. Acts by binding directly to the C-terminal domain of GyrB, which probably disrupts DNA binding by the gyrase. The sequence is that of DNA gyrase inhibitor YacG from Acinetobacter baylyi (strain ATCC 33305 / BD413 / ADP1).